The primary structure comprises 301 residues: Protoheme IX farnesyltransferase 1 (301 aa).

9 helical membrane-spanning segments follow: residues 29–49, 51–71, 101–121, 123–143, 150–170, 177–197, 223–243, 244–264, and 275–295; these read VVAL…PHAV, VQPL…AAAL, ALIF…SLVN, LTAW…TAYL, NIVI…TAVT, ALLL…ALAI, CILL…LVGM, CGPV…YKAW, and AMQV…ALLL.

It belongs to the UbiA prenyltransferase family. Protoheme IX farnesyltransferase subfamily.

The protein resides in the cell inner membrane. The enzyme catalyses heme b + (2E,6E)-farnesyl diphosphate + H2O = Fe(II)-heme o + diphosphate. It participates in porphyrin-containing compound metabolism; heme O biosynthesis; heme O from protoheme: step 1/1. Converts heme B (protoheme IX) to heme O by substitution of the vinyl group on carbon 2 of heme B porphyrin ring with a hydroxyethyl farnesyl side group. This is Protoheme IX farnesyltransferase 1 from Shewanella baltica (strain OS185).